The sequence spans 346 residues: Glycerol-1-phosphate dehydrogenase [NAD(P)+] (346 aa).

Residues 93–97 and 115–118 each bind NAD(+); these read GTIID and TTAS. Residue Asp120 participates in substrate binding. Ser124 contacts NAD(+). Asp167 lines the substrate pocket. The Zn(2+) site is built by Asp167 and His247. A substrate-binding site is contributed by His251. Residue His263 coordinates Zn(2+).

The protein belongs to the glycerol-1-phosphate dehydrogenase family. Zn(2+) is required as a cofactor.

Its subcellular location is the cytoplasm. The enzyme catalyses sn-glycerol 1-phosphate + NAD(+) = dihydroxyacetone phosphate + NADH + H(+). It carries out the reaction sn-glycerol 1-phosphate + NADP(+) = dihydroxyacetone phosphate + NADPH + H(+). It participates in membrane lipid metabolism; glycerophospholipid metabolism. In terms of biological role, catalyzes the NAD(P)H-dependent reduction of dihydroxyacetonephosphate (DHAP or glycerone phosphate) to glycerol 1-phosphate (G1P). The G1P thus generated is used as the glycerophosphate backbone of phospholipids in the cellular membranes of Archaea. The protein is Glycerol-1-phosphate dehydrogenase [NAD(P)+] of Pyrococcus furiosus (strain ATCC 43587 / DSM 3638 / JCM 8422 / Vc1).